The chain runs to 977 residues: uncharacterized protein (977 aa).

Residues 100 to 152 (ATSPLQQNGKSRDTEKPPSMKEKDLSSNSSSQHDKAFHERVDQGKNKSSTTKY) form a disordered region. Basic and acidic residues-rich tracts occupy residues 109 to 124 (KSRD…EKDL) and 131 to 144 (QHDK…DQGK). Phosphoserine is present on Ser-165. Polar residues-rich tracts occupy residues 166–175 (PGQSVNSLKP) and 183–193 (STKSSTSSEMH). The interval 166-194 (PGQSVNSLKPNSGDEVPSTKSSTSSEMHT) is disordered.

This is an uncharacterized protein from Schizosaccharomyces pombe (strain 972 / ATCC 24843) (Fission yeast).